The sequence spans 466 residues: 3-isopropylmalate dehydratase large subunit (466 aa).

[4Fe-4S] cluster is bound by residues Cys347, Cys407, and Cys410.

It belongs to the aconitase/IPM isomerase family. LeuC type 1 subfamily. In terms of assembly, heterodimer of LeuC and LeuD. [4Fe-4S] cluster is required as a cofactor.

It catalyses the reaction (2R,3S)-3-isopropylmalate = (2S)-2-isopropylmalate. Its pathway is amino-acid biosynthesis; L-leucine biosynthesis; L-leucine from 3-methyl-2-oxobutanoate: step 2/4. Catalyzes the isomerization between 2-isopropylmalate and 3-isopropylmalate, via the formation of 2-isopropylmaleate. In Shewanella pealeana (strain ATCC 700345 / ANG-SQ1), this protein is 3-isopropylmalate dehydratase large subunit.